The chain runs to 88 residues: UPF0250 protein Swoo_3713 (88 aa).

The protein belongs to the UPF0250 family.

This is UPF0250 protein Swoo_3713 from Shewanella woodyi (strain ATCC 51908 / MS32).